We begin with the raw amino-acid sequence, 81 residues long: uncharacterized protein (81 aa).

Positions 1 to 31 (MRYNSFLSVLALFNVLLWFTFILAISMTFSA) are cleaved as a signal peptide. The chain crosses the membrane as a helical span at residues 52 to 74 (WFFVLLPYVIGLFFAIFDSATIG).

It is found in the membrane. This is an uncharacterized protein from Pasteurella multocida (strain Pm70).